Consider the following 518-residue polypeptide: Subtilisin-like protease 1 (518 aa).

The N-terminal stretch at 1–19 is a signal peptide; that stretch reads MGVFRFISISLAAVSAANA. The propeptide occupies 20 to 116; the sequence is AQILSMPHAQ…VEPDTIISVH (97 aa). The Inhibitor I9 domain maps to 34 to 115; sequence SYIVMMKDDT…FVEPDTIISV (82 aa). The Peptidase S8 domain maps to 126 to 400; sequence SWGLARISNP…NVLINNGGAK (275 aa). Residues aspartate 158 and histidine 190 each act as charge relay system in the active site. The interval 175–198 is disordered; it reads GSNQVNDGDDRDGSGHGTHTSGTM. 2 N-linked (GlcNAc...) asparagine glycosylation sites follow: asparagine 233 and asparagine 251. Residues 282–294 show a composition bias toward polar residues; the sequence is NDNQDAQSSSPAS. Positions 282–312 are disordered; the sequence is NDNQDAQSSSPASEPSVCTVGSSAEDDSRSS. Serine 345 acts as the Charge relay system in catalysis. The segment covering 378-394 has biased composition (polar residues); sequence TSSITDAGPGTPTNVLI. Positions 378 to 496 are disordered; the sequence is TSSITDAGPG…PYPGGDNFDF (119 aa). Composition is skewed to pro residues over residues 405-470 and 478-487; these read NPNP…PGEP and APAPQHPHTP.

Belongs to the peptidase S8 family.

It localises to the secreted. Secreted subtilisin-like serine protease with keratinolytic activity that contributes to pathogenicity. The chain is Subtilisin-like protease 1 (SUB1) from Trichophyton verrucosum (strain HKI 0517).